A 355-amino-acid polypeptide reads, in one-letter code: UDP-N-acetylglucosamine--N-acetylmuramyl-(pentapeptide) pyrophosphoryl-undecaprenol N-acetylglucosamine transferase (355 aa).

UDP-N-acetyl-alpha-D-glucosamine is bound by residues 14 to 16 (TGG), asparagine 126, arginine 162, serine 190, isoleucine 243, 262 to 267 (ALTVSE), and glutamine 287.

The protein belongs to the glycosyltransferase 28 family. MurG subfamily.

It is found in the cell inner membrane. The enzyme catalyses di-trans,octa-cis-undecaprenyl diphospho-N-acetyl-alpha-D-muramoyl-L-alanyl-D-glutamyl-meso-2,6-diaminopimeloyl-D-alanyl-D-alanine + UDP-N-acetyl-alpha-D-glucosamine = di-trans,octa-cis-undecaprenyl diphospho-[N-acetyl-alpha-D-glucosaminyl-(1-&gt;4)]-N-acetyl-alpha-D-muramoyl-L-alanyl-D-glutamyl-meso-2,6-diaminopimeloyl-D-alanyl-D-alanine + UDP + H(+). Its pathway is cell wall biogenesis; peptidoglycan biosynthesis. In terms of biological role, cell wall formation. Catalyzes the transfer of a GlcNAc subunit on undecaprenyl-pyrophosphoryl-MurNAc-pentapeptide (lipid intermediate I) to form undecaprenyl-pyrophosphoryl-MurNAc-(pentapeptide)GlcNAc (lipid intermediate II). This chain is UDP-N-acetylglucosamine--N-acetylmuramyl-(pentapeptide) pyrophosphoryl-undecaprenol N-acetylglucosamine transferase, found in Vibrio parahaemolyticus serotype O3:K6 (strain RIMD 2210633).